Here is an 87-residue protein sequence, read N- to C-terminus: Acyl-CoA-binding protein (87 aa).

Serine 2 bears the N-acetylserine mark. One can recognise an ACB domain in the interval 2 to 87; sequence SQAEFDKAAE…VEDLKKKYGI (86 aa). The residue at position 8 (lysine 8) is an N6-acetyllysine; alternate. N6-succinyllysine; alternate is present on lysine 8. Lysine 14 is an an acyl-CoA binding site. Lysine 17 is subject to N6-succinyllysine. Lysine 19 carries the N6-acetyllysine modification. Tyrosine 29 carries the post-translational modification Phosphotyrosine. Residues 29 to 33, lysine 55, and tyrosine 74 each bind an acyl-CoA; that span reads YSHYK. The residue at position 55 (lysine 55) is an N6-acetyllysine; alternate. Lysine 55 carries the post-translational modification N6-succinyllysine; alternate. At lysine 55 the chain carries N6-(2-hydroxyisobutyryl)lysine; alternate. Lysine 55 carries the post-translational modification N6-malonyllysine; alternate. Lysine 77 carries the post-translational modification N6-acetyllysine; alternate. Lysine 77 carries the N6-succinyllysine; alternate modification.

This sequence belongs to the ACBP family. As to quaternary structure, monomer.

Its subcellular location is the endoplasmic reticulum. It localises to the golgi apparatus. In terms of biological role, binds medium- and long-chain acyl-CoA esters with very high affinity and may function as an intracellular carrier of acyl-CoA esters. The sequence is that of Acyl-CoA-binding protein (DBI) from Canis lupus familiaris (Dog).